A 371-amino-acid polypeptide reads, in one-letter code: Aspartate-semialdehyde dehydrogenase (371 aa).

Residues 9–12 (RGMV), 37–38 (TS), and glutamine 73 contribute to the NADP(+) site. Arginine 102 is a binding site for phosphate. Cysteine 135 acts as the Acyl-thioester intermediate in catalysis. Glutamine 162 contacts substrate. Residues 165 to 166 (SG) and proline 193 contribute to the NADP(+) site. Glutamate 241 is a substrate binding site. Lysine 244 provides a ligand contact to phosphate. Arginine 268 contacts substrate. Histidine 275 acts as the Proton acceptor in catalysis. Residue glutamine 351 participates in NADP(+) binding.

Belongs to the aspartate-semialdehyde dehydrogenase family. In terms of assembly, homodimer.

The enzyme catalyses L-aspartate 4-semialdehyde + phosphate + NADP(+) = 4-phospho-L-aspartate + NADPH + H(+). It functions in the pathway amino-acid biosynthesis; L-lysine biosynthesis via DAP pathway; (S)-tetrahydrodipicolinate from L-aspartate: step 2/4. It participates in amino-acid biosynthesis; L-methionine biosynthesis via de novo pathway; L-homoserine from L-aspartate: step 2/3. The protein operates within amino-acid biosynthesis; L-threonine biosynthesis; L-threonine from L-aspartate: step 2/5. Its function is as follows. Catalyzes the NADPH-dependent formation of L-aspartate-semialdehyde (L-ASA) by the reductive dephosphorylation of L-aspartyl-4-phosphate. The chain is Aspartate-semialdehyde dehydrogenase from Neisseria meningitidis serogroup A / serotype 4A (strain DSM 15465 / Z2491).